The following is a 1081-amino-acid chain: uncharacterized protein (1081 aa).

2 coiled-coil regions span residues 18-131 and 173-242; these read AIEE…FEEN and NHDE…NDDK. The span at 22-53 shows a compositional bias: basic and acidic residues; the sequence is NNKNREIQEKRQKETKDRNDRMVQNQKDRKEM. The interval 22 to 60 is disordered; that stretch reads NNKNREIQEKRQKETKDRNDRMVQNQKDRKEMIGLTNEK. 2 disordered regions span residues 250–321 and 388–1081; these read TDDE…KPGI and QEPK…GNDE. The span at 267 to 283 shows a compositional bias: pro residues; sequence TPTPTPTPTPTPTPTPT. Low complexity-rich tracts occupy residues 284–313 and 396–410; these read PTTTTTTTTTPKPTTTTTTTSTTTPTKTST and NNQSNNNNNNNQAGD. Over residues 411-421 the composition is skewed to basic and acidic residues; it reads DQNKNQNRDEN. Composition is skewed to low complexity over residues 422–568, 576–602, 614–623, 633–644, 662–672, and 680–733; these read NQGG…NNQE, NQDGGENNQDGGENNQDGENNQDGGEN, GENNQDGGEN, DGENNQDGGENN, GENNQDGGENN, and QDGG…NNQD. Composition is skewed to acidic residues over residues 748 to 768, 778 to 832, and 840 to 854; these read GGEDNQDGGEDNQDGGEDNQD, NNQD…DENN, and QDGDENNNQDGDENN. Low complexity-rich tracts occupy residues 855–869 and 877–888; these read NQDGGENNQDGGENN and NQDGGENNQDGE. The segment covering 889-954 has biased composition (acidic residues); sequence NNQDGDENNN…GDENNQDGDE (66 aa). Composition is skewed to low complexity over residues 955–975, 983–1026, and 1034–1081; these read NNQGNDENNQDGDQNNQGGDE, ENNQ…GGDE, and GENN…GNDE.

This is an uncharacterized protein from Dictyostelium discoideum (Social amoeba).